We begin with the raw amino-acid sequence, 521 residues long: 2-isopropylmalate synthase (521 aa).

Residues 5-267 (VIIFDTTLRD…HTNIKHQEIH (263 aa)) form the Pyruvate carboxyltransferase domain. 4 residues coordinate Mn(2+): Asp14, His202, His204, and Asn238. Residues 392–521 (KLNYLSVQSG…FAQKTVMETL (130 aa)) form a regulatory domain region.

This sequence belongs to the alpha-IPM synthase/homocitrate synthase family. LeuA type 1 subfamily. In terms of assembly, homodimer. It depends on Mn(2+) as a cofactor.

The protein resides in the cytoplasm. The enzyme catalyses 3-methyl-2-oxobutanoate + acetyl-CoA + H2O = (2S)-2-isopropylmalate + CoA + H(+). The protein operates within amino-acid biosynthesis; L-leucine biosynthesis; L-leucine from 3-methyl-2-oxobutanoate: step 1/4. Its function is as follows. Catalyzes the condensation of the acetyl group of acetyl-CoA with 3-methyl-2-oxobutanoate (2-ketoisovalerate) to form 3-carboxy-3-hydroxy-4-methylpentanoate (2-isopropylmalate). The sequence is that of 2-isopropylmalate synthase from Tolumonas auensis (strain DSM 9187 / NBRC 110442 / TA 4).